The sequence spans 514 residues: MSFRINTNIAALTSHAVGVQNNRDLSSSLEKLSSGLRINKAADDSSGMAIADSLRSQSANLGQAIRNANDAIGMVQTADKAMDEQIKILDTIKTKAVQAAQDGQTLESRRALQSDIQRLLEELDNIANTTSFNGQQMLSGSFSNKEFQIGAYSNATVKASIGSTSSDKIGHVRMETSSFSGAGMLASAAAQNLTEVGLNFKQVNGVNDYKIETVRISTSAGTGIGALSEIINRFSNTLGVRASYNVMATGGTPVQSGTVRELTINGVEIGTVNDVHKNDADGRLTNAINSVKDRTGVEASLDIQGRINLHSIDGRAISVHAASASGQVFGGGNFAGISGTQHAVIGRLTLTRTDARDIIVSGVNFSHVGFHSAQGVAEYTVNLRAVRGIFDANVASAAGANANGAQAETNSQGIGAGVTSLKGAMIVMDMADSARTQLDKIRSDMGSVQMELVTTINNISVTQVNVKAAESQIRDVDFAEESANFSKYNILAQSGSFAMAQANAVQQNVLRLLQ.

This sequence belongs to the bacterial flagellin family. As to quaternary structure, heteromer of FlaA and FlaB. FlaB is located proximal to the hook while the remainder of the filament is composed of the predominant FlaA.

It localises to the secreted. Its subcellular location is the bacterial flagellum. In terms of biological role, flagellin is the subunit protein which polymerizes to form the filaments of bacterial flagella. Important for motility and virulence. This Helicobacter pylori (strain ATCC 700392 / 26695) (Campylobacter pylori) protein is Flagellin B (flaB).